Here is a 269-residue protein sequence, read N- to C-terminus: Expansin-B9 (269 aa).

The N-terminal stretch at 1–24 is a signal peptide; it reads MGSLANNIMVVGAVLAALVVGGSC. Residue Asn-34 is glycosylated (N-linked (GlcNAc...) asparagine). One can recognise an Expansin-like EG45 domain in the interval 63–169; sequence GGACGIKNVN…RRVRCKYPAG (107 aa). 3 disulfides stabilise this stretch: Cys-66–Cys-94, Cys-97–Cys-164, and Cys-102–Cys-108. The Expansin-like CBD domain maps to 183-264; sequence NYVAVLVKFV…NWRPDAVYTS (82 aa).

Belongs to the expansin family. Expansin B subfamily. In terms of tissue distribution, expressed in anthers and pollen.

It is found in the secreted. The protein resides in the cell wall. It localises to the membrane. In terms of biological role, may aid fertilization by loosening the cell wall of the stigma and style, thereby facilitating penetration of the pollen tube. Acts selectively on grass cell walls, which are relatively poor in pectins and xyloglucans and rich in glucuronoarabinoxylans and (1-3),(1-4)-beta-D-glucans, when compared with cell walls of other angiosperms, including other monocots. This chain is Expansin-B9 (EXPB9), found in Zea mays (Maize).